Reading from the N-terminus, the 166-residue chain is Small ribosomal subunit protein uS5 (166 aa).

The S5 DRBM domain maps to 11-74 (LQEKLIAVNR…EKARRNMMNV (64 aa)).

Belongs to the universal ribosomal protein uS5 family. As to quaternary structure, part of the 30S ribosomal subunit. Contacts proteins S4 and S8.

Its function is as follows. With S4 and S12 plays an important role in translational accuracy. Functionally, located at the back of the 30S subunit body where it stabilizes the conformation of the head with respect to the body. This is Small ribosomal subunit protein uS5 from Buchnera aphidicola subsp. Acyrthosiphon kondoi (Acyrthosiphon kondoi symbiotic bacterium).